A 625-amino-acid chain; its full sequence is MQPNIQWLDTPAVFRVGQLPAHSDHRYYATLAEMAQQQSSFEQSLNGTWQFHYSVNAASRPKSFYELAFDAQDFEPITVPQHIELAGYEQLHYINTMYPWEGHYYRRPAFSTSDDKQHLGMFSEADYNPVGSYLHHFDLTPALRNQRVIIRFEGVEQAMYVWLNGQFIGYAEDSFTPSEFDLTPYLKETDNCLAVEVHKRSSAAFIEDQDFFRFFGIFRDVKLLAKPRTHLEDLWVIPEYDVVQQTGQVKLRLQFSGDENRVHLRIRDQHQIILTADLTSGAQVNDLYKMPELVQAWSNQTPNLYTLELEVVDQAGETIEISQQPFGFRKIEIKDKVMLLNGKRLVINGVNRHEWHPETGRTITAEDEAWDIACMQRNHINAVRTSHYPDRLSFYNGCDQAGIYMMAETNLESHGSWQKMGAVEPSWNVPGSYDEWEAATLDRARTNFETFKNHVSILFWSLGNESYAGSVLEKMNAYYKQQDPTRLVHYEGVFRAPEYKATISDVESRMYATPAEIKAYLDNAPQKPFILCEYMHDMGNSLGGMQSYIDLLSQYDMYQGGFIWDFIDQALLVTDPVTGQRELRYGGDFDDRPSDYEFSGDGLVFATRDEKPAMQEVRYYYGEHK.

The active-site Proton donor is glutamate 465. Glutamate 533 functions as the Nucleophile in the catalytic mechanism.

It belongs to the glycosyl hydrolase 2 family. As to quaternary structure, heterodimer of a large (LacL) and a small subunit (LacM).

It catalyses the reaction Hydrolysis of terminal non-reducing beta-D-galactose residues in beta-D-galactosides.. Component of a beta-galactosidase. The chain is Beta-galactosidase large subunit from Latilactobacillus sakei (Lactobacillus sakei).